The chain runs to 278 residues: Digeranylgeranylglyceryl phosphate synthase (278 aa).

The next 8 helical transmembrane spans lie at 12 to 32 (LKNC…ASYF), 34 to 54 (LATV…CGFG), 91 to 111 (LLVF…LMAV), 129 to 149 (IIGN…GGIA), 153 to 173 (IDVT…REII), 204 to 224 (FLLV…FFGI), 225 to 245 (YYML…YNLV), and 257 to 277 (SRNI…GSLF).

The protein belongs to the UbiA prenyltransferase family. DGGGP synthase subfamily. Mg(2+) serves as cofactor.

Its subcellular location is the cell membrane. The enzyme catalyses sn-3-O-(geranylgeranyl)glycerol 1-phosphate + (2E,6E,10E)-geranylgeranyl diphosphate = 2,3-bis-O-(geranylgeranyl)-sn-glycerol 1-phosphate + diphosphate. It functions in the pathway membrane lipid metabolism; glycerophospholipid metabolism. Its function is as follows. Prenyltransferase that catalyzes the transfer of the geranylgeranyl moiety of geranylgeranyl diphosphate (GGPP) to the C2 hydroxyl of (S)-3-O-geranylgeranylglyceryl phosphate (GGGP). This reaction is the second ether-bond-formation step in the biosynthesis of archaeal membrane lipids. This chain is Digeranylgeranylglyceryl phosphate synthase, found in Methanococcus maripaludis (strain C7 / ATCC BAA-1331).